The chain runs to 304 residues: E3 ubiquitin-protein ligase RNF115 (304 aa).

Ala2 carries the post-translational modification N-acetylalanine. The tract at residues 95–138 (PLDQDNRANERGHQTHTDFWGARPPRLPLGRRYRSRGSSRPDRS) is disordered. Positions 98-110 (QDNRANERGHQTH) are enriched in basic and acidic residues. Ser132 and Ser133 each carry phosphoserine; by PKB/AKT1. The segment at 228–269 (CPVCKEDYTVEEEVRQLPCNHFFHSSCIVPWLELHDTCPVCR) adopts an RING-type zinc-finger fold. The tract at residues 272–304 (LNGEDSTRQSQSTEASASNRFSNDSQLHDRWTF) is disordered. The segment covering 279–296 (RQSQSTEASASNRFSNDS) has biased composition (polar residues).

Interacts with RAB7A. Interacts with EGFR and FLT3. Interacts with BST2. Interacts with STX17. Interacts with YWHAE. In terms of processing, phosphorylated by AKT1, allowing association with the 14-3-3 chaperones that facilitates associating with TLRs. Post-translationally, RING-type zinc finger-dependent and E2-dependent autoubiquitination. Deubiquitinated by USP9X; antogonizing its autoubiquitination and subsequent proteasomal degradation. In terms of tissue distribution, expressed at extremely low levels in normal breast, prostate, lung, colon. Higher levels of expression are detected in heart, skeletal muscle, testis as well as in breast and prostate cancer cells.

Its subcellular location is the cytoplasm. The protein resides in the nucleus. The protein localises to the endoplasmic reticulum. It is found in the golgi apparatus. It carries out the reaction S-ubiquitinyl-[E2 ubiquitin-conjugating enzyme]-L-cysteine + [acceptor protein]-L-lysine = [E2 ubiquitin-conjugating enzyme]-L-cysteine + N(6)-ubiquitinyl-[acceptor protein]-L-lysine.. It participates in protein modification; protein ubiquitination. In terms of biological role, E3 ubiquitin-protein ligase that catalyzes the 'Lys-48'- and/or 'Lys-63'-linked polyubiquitination of various substrates and thereby plays a role in a number of signaling pathways including autophagy, innate immunity, cell proliferation and cell death. Plays a role in the endosomal trafficking and degradation of membrane receptors including EGFR, FLT3, MET and CXCR4 through their polyubiquitination. Participates together with BST2 in antiviral immunity by facilitating the internalization of HIV-1 virions into intracellular vesicles leading to their lysosomal degradation. Also possesses an antiviral activity independently of BST2 by promoting retroviral GAG proteins ubiquitination, redistribution to endo-lysosomal compartments and, ultimately, lysosomal degradation. Catalyzes distinct types of ubiquitination on MAVS and STING1 at different phases of viral infection to promote innate antiviral response. Mediates the 'Lys-48'-linked ubiquitination of MAVS leading to its proteasomal degradation and ubiquitinates STING1 via 'Lys-63'-linked polyubiquitination, critical for its oligomerization and the subsequent recruitment of TBK1. Plays a positive role in the autophagosome-lysosome fusion by interacting with STX17 and enhancing its stability without affecting 'Lys-48'- or 'Lys-63'-linked polyubiquitination levels, which in turn promotes autophagosome maturation. Negatively regulates TLR-induced expression of proinflammatory cytokines by catalyzing 'Lys-11'-linked ubiquitination of RAB1A and RAB13 to inhibit post-ER trafficking of TLRs to the Golgi by RAB1A and subsequently from the Golgi apparatus to the cell surface by RAB13. The sequence is that of E3 ubiquitin-protein ligase RNF115 from Homo sapiens (Human).